An 860-amino-acid polypeptide reads, in one-letter code: Leucine--tRNA ligase (860 aa).

Positions 42-52 (PYPSGRLHMGH) match the 'HIGH' region motif. The 'KMSKS' region signature appears at 619 to 623 (KMSKS). Position 622 (Lys622) interacts with ATP.

It belongs to the class-I aminoacyl-tRNA synthetase family.

The protein resides in the cytoplasm. The enzyme catalyses tRNA(Leu) + L-leucine + ATP = L-leucyl-tRNA(Leu) + AMP + diphosphate. This chain is Leucine--tRNA ligase, found in Escherichia coli O127:H6 (strain E2348/69 / EPEC).